A 63-amino-acid polypeptide reads, in one-letter code: MLGQSIRRFTTSVVRRSHYEEGPGKNIPFSVENKWRLLAMMTLFFGSGFAAPFFIVRHQLLKK.

The transit peptide at 1–16 (MLGQSIRRFTTSVVRR) directs the protein to the mitochondrion. The Mitochondrial matrix portion of the chain corresponds to 17-33 (SHYEEGPGKNIPFSVEN). Lys25 bears the N6-acetyllysine; alternate mark. An N6-succinyllysine; alternate modification is found at Lys25. The chain crosses the membrane as a helical span at residues 34-60 (KWRLLAMMTLFFGSGFAAPFFIVRHQL). The Mitochondrial intermembrane portion of the chain corresponds to 61-63 (LKK).

Belongs to the cytochrome c oxidase VIIc family. In terms of assembly, component of the cytochrome c oxidase (complex IV, CIV), a multisubunit enzyme composed of 14 subunits. The complex is composed of a catalytic core of 3 subunits MT-CO1, MT-CO2 and MT-CO3, encoded in the mitochondrial DNA, and 11 supernumerary subunits COX4I1 (or COX4I2), COX5A, COX5B, COX6A2 (or COX6A1), COX6B1 (or COX6B2), COX6C, COX7A1 (or COX7A2), COX7B, COX7C, COX8B and NDUFA4, which are encoded in the nuclear genome. The complex exists as a monomer or a dimer and forms supercomplexes (SCs) in the inner mitochondrial membrane with NADH-ubiquinone oxidoreductase (complex I, CI) and ubiquinol-cytochrome c oxidoreductase (cytochrome b-c1 complex, complex III, CIII), resulting in different assemblies (supercomplex SCI(1)III(2)IV(1) and megacomplex MCI(2)III(2)IV(2)). Interacts with RAB5IF. Liver, heart, muscle and brain, contain the same isoform of COX VIIc, but at different concentrations.

It is found in the mitochondrion inner membrane. The protein operates within energy metabolism; oxidative phosphorylation. Its function is as follows. Component of the cytochrome c oxidase, the last enzyme in the mitochondrial electron transport chain which drives oxidative phosphorylation. The respiratory chain contains 3 multisubunit complexes succinate dehydrogenase (complex II, CII), ubiquinol-cytochrome c oxidoreductase (cytochrome b-c1 complex, complex III, CIII) and cytochrome c oxidase (complex IV, CIV), that cooperate to transfer electrons derived from NADH and succinate to molecular oxygen, creating an electrochemical gradient over the inner membrane that drives transmembrane transport and the ATP synthase. Cytochrome c oxidase is the component of the respiratory chain that catalyzes the reduction of oxygen to water. Electrons originating from reduced cytochrome c in the intermembrane space (IMS) are transferred via the dinuclear copper A center (CU(A)) of subunit 2 and heme A of subunit 1 to the active site in subunit 1, a binuclear center (BNC) formed by heme A3 and copper B (CU(B)). The BNC reduces molecular oxygen to 2 water molecules using 4 electrons from cytochrome c in the IMS and 4 protons from the mitochondrial matrix. The protein is Cytochrome c oxidase subunit 7C, mitochondrial (COX7C) of Bos taurus (Bovine).